Reading from the N-terminus, the 279-residue chain is Shikimate dehydrogenase (NADP(+)) (279 aa).

Shikimate contacts are provided by residues 17–19 (SLS) and threonine 64. Lysine 68 acts as the Proton acceptor in catalysis. Residue aspartate 80 participates in NADP(+) binding. Positions 89 and 105 each coordinate shikimate. NADP(+)-binding positions include 129-133 (GAGGS), 153-158 (NRTAKK), and leucine 221. Tyrosine 223 contacts shikimate. Glycine 245 contributes to the NADP(+) binding site.

It belongs to the shikimate dehydrogenase family. Homodimer.

The enzyme catalyses shikimate + NADP(+) = 3-dehydroshikimate + NADPH + H(+). Its pathway is metabolic intermediate biosynthesis; chorismate biosynthesis; chorismate from D-erythrose 4-phosphate and phosphoenolpyruvate: step 4/7. Involved in the biosynthesis of the chorismate, which leads to the biosynthesis of aromatic amino acids. Catalyzes the reversible NADPH linked reduction of 3-dehydroshikimate (DHSA) to yield shikimate (SA). The chain is Shikimate dehydrogenase (NADP(+)) from Idiomarina loihiensis (strain ATCC BAA-735 / DSM 15497 / L2-TR).